We begin with the raw amino-acid sequence, 354 residues long: S-adenosylmethionine-dependent nucleotide dehydratase RSAD2 (354 aa).

Residues 62–282 (AMTPTSVNYH…LDRHSSISCL (221 aa)) enclose the Radical SAM core domain. The [4Fe-4S] cluster site is built by Cys-76, Cys-80, and Cys-83.

Belongs to the radical SAM superfamily. RSAD2 family. Requires [4Fe-4S] cluster as cofactor. In terms of tissue distribution, constitutively expressed in spleen, head kidney and trunk kidney. Following viral infection, detected in most organs including liver, gill, intestine, heart, muscle and brain.

The protein resides in the endoplasmic reticulum membrane. Functionally, interferon-inducible iron-sulfur (4FE-4S) cluster-binding antiviral protein which plays a major role in the cell antiviral state induced by type I and type II interferon. This is S-adenosylmethionine-dependent nucleotide dehydratase RSAD2 from Siniperca chuatsi (Mandarin fish).